The sequence spans 481 residues: ATP synthase subunit beta, plastid (481 aa).

162–169 (GGAGVGKT) serves as a coordination point for ATP.

The protein belongs to the ATPase alpha/beta chains family. F-type ATPases have 2 components, CF(1) - the catalytic core - and CF(0) - the membrane proton channel. CF(1) has five subunits: alpha(3), beta(3), gamma(1), delta(1), epsilon(1). CF(0) has four main subunits: a(1), b(1), b'(1) and c(9-12).

The protein resides in the plastid membrane. The enzyme catalyses ATP + H2O + 4 H(+)(in) = ADP + phosphate + 5 H(+)(out). Produces ATP from ADP in the presence of a proton gradient across the membrane. The catalytic sites are hosted primarily by the beta subunits. In Prototheca wickerhamii, this protein is ATP synthase subunit beta, plastid (atpB).